Reading from the N-terminus, the 223-residue chain is Ribonuclease 3 (223 aa).

The 124-residue stretch at 4–127 (LEEFERNLGY…VMGAIYLEAG (124 aa)) folds into the RNase III domain. Residue Glu40 coordinates Mg(2+). Asp44 is an active-site residue. Mg(2+) contacts are provided by Asp113 and Glu116. Glu116 is an active-site residue. The DRBM domain occupies 154-223 (DYKTALQEVT…AKIALEKIKK (70 aa)).

It belongs to the ribonuclease III family. In terms of assembly, homodimer. Requires Mg(2+) as cofactor.

The protein localises to the cytoplasm. The catalysed reaction is Endonucleolytic cleavage to 5'-phosphomonoester.. Functionally, digests double-stranded RNA. Involved in the processing of primary rRNA transcript to yield the immediate precursors to the large and small rRNAs (23S and 16S). Processes some mRNAs, and tRNAs when they are encoded in the rRNA operon. Processes pre-crRNA and tracrRNA of type II CRISPR loci if present in the organism. The protein is Ribonuclease 3 of Campylobacter concisus (strain 13826).